We begin with the raw amino-acid sequence, 510 residues long: D-alanine--D-alanyl carrier protein ligase (510 aa).

157–158 (TS) provides a ligand contact to ATP. D202 contacts D-alanine. ATP is bound at residue 297–302 (NTYGPT). Residue V306 participates in D-alanine binding. ATP-binding residues include D389 and K498. A D-alanine-binding site is contributed by K498.

It belongs to the ATP-dependent AMP-binding enzyme family. DltA subfamily.

It localises to the cytoplasm. It catalyses the reaction holo-[D-alanyl-carrier protein] + D-alanine + ATP = D-alanyl-[D-alanyl-carrier protein] + AMP + diphosphate. It functions in the pathway cell wall biogenesis; lipoteichoic acid biosynthesis. Its function is as follows. Catalyzes the first step in the D-alanylation of lipoteichoic acid (LTA), the activation of D-alanine and its transfer onto the D-alanyl carrier protein (Dcp) DltC. In an ATP-dependent two-step reaction, forms a high energy D-alanyl-AMP intermediate, followed by transfer of the D-alanyl residue as a thiol ester to the phosphopantheinyl prosthetic group of the Dcp. D-alanylation of LTA plays an important role in modulating the properties of the cell wall in Gram-positive bacteria, influencing the net charge of the cell wall. In Listeria monocytogenes serotype 4b (strain F2365), this protein is D-alanine--D-alanyl carrier protein ligase.